A 590-amino-acid chain; its full sequence is Aspartate--tRNA(Asp/Asn) ligase (590 aa).

Glu170 is a binding site for L-aspartate. The aspartate stretch occupies residues 194–197 (QLFK). Residue Arg216 coordinates L-aspartate. ATP is bound by residues 216–218 (RDE) and Gln225. His448 lines the L-aspartate pocket. Residue Glu482 coordinates ATP. Arg489 provides a ligand contact to L-aspartate. 534–537 (GWDR) contacts ATP. The segment at 557 to 590 (SGGGADPLTGAPAPITPQQRRESGIDAKPKKDGE) is disordered. Residues 575–590 (QRRESGIDAKPKKDGE) show a composition bias toward basic and acidic residues.

It belongs to the class-II aminoacyl-tRNA synthetase family. Type 1 subfamily. As to quaternary structure, homodimer.

It localises to the cytoplasm. It carries out the reaction tRNA(Asx) + L-aspartate + ATP = L-aspartyl-tRNA(Asx) + AMP + diphosphate. Its function is as follows. Aspartyl-tRNA synthetase with relaxed tRNA specificity since it is able to aspartylate not only its cognate tRNA(Asp) but also tRNA(Asn). Reaction proceeds in two steps: L-aspartate is first activated by ATP to form Asp-AMP and then transferred to the acceptor end of tRNA(Asp/Asn). The sequence is that of Aspartate--tRNA(Asp/Asn) ligase from Mycobacterium sp. (strain KMS).